A 193-amino-acid chain; its full sequence is Early light-induced protein 2, chloroplastic (193 aa).

The N-terminal 43 residues, 1-43 (MATASFNMQSVFAAPSGVLTTRNIRNTNQLFFKRIAPVGVRCM), are a transit peptide targeting the chloroplast. The segment at 46 to 80 (GDPIKEDPSVPSTSTSATPPQMPQSPPPPVSKPKV) is disordered. Over residues 54–64 (SVPSTSTSATP) the composition is skewed to low complexity. The span at 65-76 (PQMPQSPPPPVS) shows a compositional bias: pro residues. A run of 3 helical transmembrane segments spans residues 102 to 122 (LAMVGFVAAIAMELSKGENVF), 129 to 149 (GVGWFLGTTALLTLASMVPLF), and 173 to 193 (FAMLGLVALAFTEYVTGGTLV).

The protein belongs to the ELIP/psbS family.

It localises to the plastid. Its subcellular location is the chloroplast thylakoid membrane. Probably involved in the integration of pigments into the mature light-harvesting pigment-protein complexes. Light-harvesting chlorophyll (LHC) a/b-binding protein required to ensure a high rate of chlorophyll accumulation during deetiolation in continuous high light. Involved in seed germination. May fulfill a photoprotective functions. Prevents excess accumulation of free chlorophyll by inhibiting the entire chlorophyll biosynthesis pathway (e.g. 5-aminolevulinate synthesis and Mg-protoporphyrin IX chelatase activity), and hence prevent photooxidative stress. This chain is Early light-induced protein 2, chloroplastic, found in Arabidopsis thaliana (Mouse-ear cress).